Reading from the N-terminus, the 233-residue chain is Large ribosomal subunit protein uL1 (233 aa).

Belongs to the universal ribosomal protein uL1 family. Part of the 50S ribosomal subunit.

Binds directly to 23S rRNA. The L1 stalk is quite mobile in the ribosome, and is involved in E site tRNA release. Its function is as follows. Protein L1 is also a translational repressor protein, it controls the translation of the L11 operon by binding to its mRNA. In Paracoccus denitrificans (strain Pd 1222), this protein is Large ribosomal subunit protein uL1.